A 442-amino-acid chain; its full sequence is tRNA modification GTPase MnmE (442 aa).

Residues R27, E84, and K124 each contribute to the (6S)-5-formyl-5,6,7,8-tetrahydrofolate site. The TrmE-type G domain maps to 221–366 (GFQIVILGAP…LMELISQASA (146 aa)). GTP contacts are provided by residues 231–236 (NAGKSS), 250–256 (TEEPGTT), 275–278 (DTAG), and 329–332 (NKAD). Mg(2+) is bound by residues S235 and T256. K442 serves as a coordination point for (6S)-5-formyl-5,6,7,8-tetrahydrofolate.

This sequence belongs to the TRAFAC class TrmE-Era-EngA-EngB-Septin-like GTPase superfamily. TrmE GTPase family. Homodimer. Heterotetramer of two MnmE and two MnmG subunits. Requires K(+) as cofactor.

It localises to the cytoplasm. Functionally, exhibits a very high intrinsic GTPase hydrolysis rate. Involved in the addition of a carboxymethylaminomethyl (cmnm) group at the wobble position (U34) of certain tRNAs, forming tRNA-cmnm(5)s(2)U34. This is tRNA modification GTPase MnmE from Chelativorans sp. (strain BNC1).